The chain runs to 940 residues: Chordin (940 aa).

The first 19 residues, 1–19 (MMEGLLWILLSVIIASVHG), serve as a signal peptide directing secretion. The VWFC 1 domain occupies 42–118 (SGCSFGGRFY…LPGHCCKTCP (77 aa)). CHRD domains lie at 162–277 (TTTD…KHRA), 279–398 (FAET…GRRS), 404–519 (SVLS…LLPY), and 525–652 (RRNE…VPNH). N-linked (GlcNAc...) asparagine glycosylation is found at Asn-347 and Asn-430. VWFC domains are found at residues 689 to 748 (HSCF…PICE), 767 to 836 (EGCY…KECP), and 855 to 919 (RLCK…PECI).

This sequence belongs to the chordin family. Interacts with twsg1 and/or bmp4. Cleaved by tolloid proteases; cleavage participates in dorsoventral patterning during early development.

It is found in the secreted. In terms of biological role, dorsalizing factor. Key developmental protein that dorsalizes early vertebrate embryonic tissues by binding to ventralizing TGF-beta family bone morphogenetic proteins (BMPs) and sequestering them in latent complexes. This chain is Chordin (chd), found in Danio rerio (Zebrafish).